We begin with the raw amino-acid sequence, 206 residues long: 2,3-bisphosphoglycerate-dependent phosphoglycerate mutase (206 aa).

Substrate-binding positions include Arg-9–Asn-16, Thr-22–Gly-23, Arg-61, Glu-88–Tyr-91, Lys-99, Arg-115–Arg-116, and Gly-159–Asn-160. His-10 acts as the Tele-phosphohistidine intermediate in catalysis. Glu-88 acts as the Proton donor/acceptor in catalysis.

The protein belongs to the phosphoglycerate mutase family. BPG-dependent PGAM subfamily. In terms of assembly, homodimer.

It carries out the reaction (2R)-2-phosphoglycerate = (2R)-3-phosphoglycerate. It functions in the pathway carbohydrate degradation; glycolysis; pyruvate from D-glyceraldehyde 3-phosphate: step 3/5. Catalyzes the interconversion of 2-phosphoglycerate and 3-phosphoglycerate. This is 2,3-bisphosphoglycerate-dependent phosphoglycerate mutase from Brucella anthropi (strain ATCC 49188 / DSM 6882 / CCUG 24695 / JCM 21032 / LMG 3331 / NBRC 15819 / NCTC 12168 / Alc 37) (Ochrobactrum anthropi).